Consider the following 88-residue polypeptide: Antitoxin VapB3 (88 aa).

In terms of biological role, antitoxin component of a type II toxin-antitoxin (TA) system. This is Antitoxin VapB3 (vapB3) from Mycobacterium tuberculosis (strain CDC 1551 / Oshkosh).